The chain runs to 579 residues: Protein alan shepard (579 aa).

Residues 1–12 show a composition bias toward pro residues; the sequence is MHPRYSPAPPPQ. Residues 1-66 form a disordered region; the sequence is MHPRYSPAPP…GSSSSAAAAP (66 aa). The residue at position 5 (Tyr5) is a Phosphotyrosine. The span at 13-24 shows a compositional bias: low complexity; it reads QQQQMGGPPHQQ. The span at 25–35 shows a compositional bias: gly residues; it reads QGGGGGGGGSM. The segment covering 37 to 54 has biased composition (polar residues); sequence GPSNAQQLPPQIPRSQNY. Over residues 55–66 the composition is skewed to low complexity; that stretch reads SNGSSSSAAAAP. Phosphotyrosine is present on residues Tyr125 and Tyr142. Positions 164-225 are disordered; it reads PATTTYGQRV…TVQNQNQQGG (62 aa). Residues 178 to 225 show a composition bias toward low complexity; sequence SPSNTNSSSSSNTGSQSGTLSTSLSNTTNTNTNMGPNGTVQNQNQQGG. 2 consecutive RRM domains span residues 231–304 and 310–389; these read TNLY…MAKQ and TNLY…FADG. Positions 553–579 are disordered; the sequence is MTDSEQASTAASPDEAYTQYPHQAAPK.

Its function is as follows. Has a role in the perception of gravity. The polypeptide is Protein alan shepard (Drosophila sechellia (Fruit fly)).